A 515-amino-acid polypeptide reads, in one-letter code: 2-isopropylmalate synthase (515 aa).

The 263-residue stretch at 4 to 266 folds into the Pyruvate carboxyltransferase domain; it reads IKIFDTTLRD…ETGLILKETK (263 aa). Positions 13, 201, 203, and 237 each coordinate Mn(2+). The tract at residues 392-515 is regulatory domain; sequence KLIQFGVSYD…ANLTRLVYES (124 aa).

The protein belongs to the alpha-IPM synthase/homocitrate synthase family. LeuA type 1 subfamily. In terms of assembly, homodimer. Mn(2+) serves as cofactor.

It is found in the cytoplasm. The catalysed reaction is 3-methyl-2-oxobutanoate + acetyl-CoA + H2O = (2S)-2-isopropylmalate + CoA + H(+). The protein operates within amino-acid biosynthesis; L-leucine biosynthesis; L-leucine from 3-methyl-2-oxobutanoate: step 1/4. Catalyzes the condensation of the acetyl group of acetyl-CoA with 3-methyl-2-oxobutanoate (2-ketoisovalerate) to form 3-carboxy-3-hydroxy-4-methylpentanoate (2-isopropylmalate). This Oceanobacillus iheyensis (strain DSM 14371 / CIP 107618 / JCM 11309 / KCTC 3954 / HTE831) protein is 2-isopropylmalate synthase.